The following is a 318-amino-acid chain: NADH-ubiquinone oxidoreductase chain 1 (318 aa).

The next 9 helical transmembrane spans lie at 2-22 (FLMN…FLTL), 37-57 (PNIV…KLFI), 69-89 (LMFT…WIPM), 100-120 (LGVL…LWSG), 136-156 (VAQT…VMMM), 171-191 (HMWL…STLA), 231-251 (IIMM…NPLF), 253-273 (ELFT…FLWV), and 293-313 (FLPL…LSAG).

This sequence belongs to the complex I subunit 1 family. Core subunit of respiratory chain NADH dehydrogenase (Complex I) which is composed of 45 different subunits.

The protein resides in the mitochondrion inner membrane. It catalyses the reaction a ubiquinone + NADH + 5 H(+)(in) = a ubiquinol + NAD(+) + 4 H(+)(out). Core subunit of the mitochondrial membrane respiratory chain NADH dehydrogenase (Complex I) which catalyzes electron transfer from NADH through the respiratory chain, using ubiquinone as an electron acceptor. Essential for the catalytic activity and assembly of complex I. The protein is NADH-ubiquinone oxidoreductase chain 1 (MT-ND1) of Zaedyus pichiy (Pichi).